The chain runs to 380 residues: ATP phosphoribosyltransferase regulatory subunit (380 aa).

This sequence belongs to the class-II aminoacyl-tRNA synthetase family. HisZ subfamily. As to quaternary structure, heteromultimer composed of HisG and HisZ subunits.

It is found in the cytoplasm. Its pathway is amino-acid biosynthesis; L-histidine biosynthesis; L-histidine from 5-phospho-alpha-D-ribose 1-diphosphate: step 1/9. Its function is as follows. Required for the first step of histidine biosynthesis. May allow the feedback regulation of ATP phosphoribosyltransferase activity by histidine. The protein is ATP phosphoribosyltransferase regulatory subunit of Thermoanaerobacter pseudethanolicus (strain ATCC 33223 / 39E) (Clostridium thermohydrosulfuricum).